A 732-amino-acid polypeptide reads, in one-letter code: Small conductance calcium-activated potassium channel protein 3 (732 aa).

The span at 1-11 (MDTSGHFHDSG) shows a compositional bias: basic and acidic residues. 2 disordered regions span residues 1–82 (MDTS…QQAP) and 103–162 (HSSP…ASPL). The span at 35–59 (QPPPPSAPPAVPQQPPGPLLQPQPP) shows a compositional bias: pro residues. The span at 60-82 (QLQQQQQQQQQQQQQQQQQQQAP) shows a compositional bias: low complexity. Positions 113–133 (NSANSTAILHPSSRQGSQLNL) are enriched in polar residues. A compositionally biased stretch (low complexity) spans 139–148 (GHSPSSTATS). At Ser-168 the chain carries Phosphoserine. Over residues 241 to 257 (THNHQHAGTTAGSTTFP) the composition is skewed to polar residues. Positions 241-260 (THNHQHAGTTAGSTTFPKAN) are disordered. The helical transmembrane segment at 289–309 (LIFGMFGIVVMVIETELSWGL) threads the bilayer. Residues 316 to 336 (FSLALKCLISLSTIILLGLII) traverse the membrane as a helical segment. The chain crosses the membrane as a helical span at residues 367 to 387 (ISLEMLVCAIHPIPGEYKFFW). The helical transmembrane segment at 406-426 (IILSIPMFLRLYLIARVMLLH) threads the bilayer. A helical transmembrane segment spans residues 455 to 475 (LMTICPGTVLLVFSISLWIIA). The pore-forming intramembrane region spans 495 to 515 (FLGAMWLISITFLSIGYGDMV). The chain crosses the membrane as a helical span at residues 524–544 (VCLLTGIMGAGCTALVVAVVA). The tract at residues 562–638 (DTQLTKRIKN…LVDLSKMQNV (77 aa)) is calmodulin-binding. Positions 643–670 (ITELNDRSEDLEKQIGSLESKLEHLTAS) form a coiled coil. The interval 704 to 732 (GTSHAPPSDSPIGISSTSFPTPYTSSSSC) is disordered. The span at 718-732 (SSTSFPTPYTSSSSC) shows a compositional bias: low complexity.

It belongs to the potassium channel KCNN family. KCa2.3/KCNN3 subfamily. Homodimer. Heteromultimer with KCNN2 or KCNN1; this modulates plasma membrane expression and consequently the small conductance calcium-activated potassium channel activity. The complex is composed of 4 channel subunits each of which binds to a calmodulin subunit which regulates the channel activity through calcium-binding. Interacts with CALM1.

The protein localises to the cell membrane. It is found in the cytoplasm. It localises to the myofibril. The protein resides in the sarcomere. Its subcellular location is the z line. The catalysed reaction is K(+)(in) = K(+)(out). Inhibited by bee venom neurotoxin apamin. Functionally, small conductance calcium-activated potassium channel that mediates the voltage-independent transmembrane transfer of potassium across the cell membrane through a constitutive interaction with calmodulin which binds the intracellular calcium allowing its opening. The current is characterized by a voltage-independent activation, an intracellular calcium concentration increase-dependent activation and a single-channel conductance of 10 picosiemens. Also presents an inwardly rectifying current, thus reducing its already small outward conductance of potassium ions, which is particularly the case when the membrane potential displays positive values, above + 20 mV. Activation is followed by membrane hyperpolarization. Thought to regulate neuronal excitability by contributing to the slow component of synaptic afterhyperpolarization. The polypeptide is Small conductance calcium-activated potassium channel protein 3 (Rattus norvegicus (Rat)).